The following is a 257-amino-acid chain: Imidazole glycerol phosphate synthase subunit HisF (257 aa).

Active-site residues include D11 and D130.

The protein belongs to the HisA/HisF family. As to quaternary structure, heterodimer of HisH and HisF.

The protein resides in the cytoplasm. It carries out the reaction 5-[(5-phospho-1-deoxy-D-ribulos-1-ylimino)methylamino]-1-(5-phospho-beta-D-ribosyl)imidazole-4-carboxamide + L-glutamine = D-erythro-1-(imidazol-4-yl)glycerol 3-phosphate + 5-amino-1-(5-phospho-beta-D-ribosyl)imidazole-4-carboxamide + L-glutamate + H(+). It participates in amino-acid biosynthesis; L-histidine biosynthesis; L-histidine from 5-phospho-alpha-D-ribose 1-diphosphate: step 5/9. In terms of biological role, IGPS catalyzes the conversion of PRFAR and glutamine to IGP, AICAR and glutamate. The HisF subunit catalyzes the cyclization activity that produces IGP and AICAR from PRFAR using the ammonia provided by the HisH subunit. This chain is Imidazole glycerol phosphate synthase subunit HisF, found in Prochlorococcus marinus (strain MIT 9515).